The sequence spans 484 residues: MITRTKIICTIGPATNSPEMLAKLLDAGMNVARLNFSHGSHETHGQAIGFLKELREQKRVPLAIMLDTKGPEIRLGNIPQPISVSQGQKLRLVSSDIDGSAEGGVSLYPKGIFPFVPEGADVLIDDGYIHAVVVSSEADSLELEFMNSGLLKSHKSLSIRGVDVALPFMTEKDIADLKFGVEQNMDVVAASFVRYGEDIETMRKCLADLGNPKMPIIAKIENRLGVENFSKIAKLADGIMIARGDLGIELSVVEVPNLQKMMAKVSRETGHFCVTATQMLESMIRNVLPTRAEVSDIANAIYDGSSAVMLSGETASGAHPVAAVKIMRSVILETEKNLSHDSFLKLDDSNSALQVSPYLSAIGLAGIQIAERADAKALIVYTESGSSPMFLSKYRPKFPIIAVTPSTSVYYRLALEWGVYPMLTQESDRAVWRHQACIYGIEQGILSNYDRILVLSRGACMEETNNLTLTIVNDILTGSEFPET.

Residue R33 coordinates substrate. Residues N35, S37, D67, and T68 each contribute to the K(+) site. 35–38 (NFSH) contributes to the ATP binding site. R74 and K155 together coordinate ATP. Position 221 (E221) interacts with Mg(2+). Residues G244, D245, and T277 each contribute to the substrate site. D245 contributes to the Mg(2+) binding site.

Belongs to the pyruvate kinase family. Homotetramer. Requires Mg(2+) as cofactor. It depends on K(+) as a cofactor.

The enzyme catalyses pyruvate + ATP = phosphoenolpyruvate + ADP + H(+). It functions in the pathway carbohydrate degradation; glycolysis; pyruvate from D-glyceraldehyde 3-phosphate: step 5/5. In Chlamydia pneumoniae (Chlamydophila pneumoniae), this protein is Pyruvate kinase (pyk).